Consider the following 502-residue polypeptide: Mannitol 2-dehydrogenase (502 aa).

Residue 37–48 (IVHIGVGGFHRA) participates in NAD(+) binding.

This sequence belongs to the mannitol dehydrogenase family. In terms of assembly, monomer.

The enzyme catalyses D-mannitol + NAD(+) = D-fructose + NADH + H(+). In terms of biological role, catalyzes the NAD(H)-dependent interconversion of D-fructose and D-mannitol in the mannitol metabolic pathway. The protein is Mannitol 2-dehydrogenase of Aspergillus clavatus (strain ATCC 1007 / CBS 513.65 / DSM 816 / NCTC 3887 / NRRL 1 / QM 1276 / 107).